The sequence spans 372 residues: Alpha-parvin (372 aa).

Residues 1-11 (MATSPQKSPSV) show a composition bias toward low complexity. The segment at 1 to 45 (MATSPQKSPSVPKSPTPKSPPSRKKDDSFLGKLGGTLARRKKAKE) is disordered. An N-acetylalanine modification is found at Ala-2. A phosphoserine mark is found at Ser-8, Ser-14, and Ser-19. Positions 21 to 25 (PSRKK) are interaction with ARHGAP31. Phosphoserine is present on residues Ser-28 and Ser-62. Calponin-homology (CH) domains lie at 95–202 (QELM…QYFR) and 262–369 (NVVK…TKYR). The interval 223-372 (GILQSRQIQE…NLFTKYRNVE (150 aa)) is required for interaction with TESK1 and ILK.

Belongs to the parvin family. As to quaternary structure, component of the heterotrimeric IPP (ILK-PINCH-PARVIN) complex composed of ILK, LIMS1/PINCH and PARVA; the complex binds to F-actin via the C-terminal tail of LIMS1 and the N-terminal region of PARVA, promoting F-actin filament bundling. Formation of the IPP complex is dependent on protein kinase C and precedes integrin-mediated cell adhesion and spreading. Interacts with TGFB1I1. Interacts with ARHGAP31. Interacts with the actin cytoskeleton. Interacts (via C-terminus) with TESK1 (via C-terminus); the interaction inhibits TESK1 kinase activity. Interacts with PXN/PAXILLIN (via LD motif 4). In terms of tissue distribution, widely expressed, with highest levels in heart, skeletal muscle, kidney and liver.

The protein localises to the cell junction. It localises to the focal adhesion. Its subcellular location is the cell membrane. The protein resides in the cytoplasm. It is found in the cytoskeleton. The protein localises to the myofibril. It localises to the sarcomere. Its subcellular location is the z line. Functionally, plays a role in sarcomere organization and in smooth muscle cell contraction. Required for normal development of the embryonic cardiovascular system, and for normal septation of the heart outflow tract. Plays a role in sprouting angiogenesis and is required for normal adhesion of vascular smooth muscle cells to endothelial cells during blood vessel development. Plays a role in the reorganization of the actin cytoskeleton, formation of lamellipodia and ciliogenesis. Plays a role in the establishment of cell polarity, cell adhesion, cell spreading, and directed cell migration. Within the IPP (ILK-PINCH-PARVIN) complex, binds to F-actin, promoting F-actin bundling, a process required to generate force for actin cytoskeleton reorganization and subsequent dynamic cell adhesion events such as cell spreading and migration. The polypeptide is Alpha-parvin (PARVA) (Homo sapiens (Human)).